The primary structure comprises 430 residues: UDP-N-acetylmuramoylalanine--D-glutamate ligase (430 aa).

109-115 contributes to the ATP binding site; the sequence is GTDGKST.

The protein belongs to the MurCDEF family.

Its subcellular location is the cytoplasm. It catalyses the reaction UDP-N-acetyl-alpha-D-muramoyl-L-alanine + D-glutamate + ATP = UDP-N-acetyl-alpha-D-muramoyl-L-alanyl-D-glutamate + ADP + phosphate + H(+). It participates in cell wall biogenesis; peptidoglycan biosynthesis. Functionally, cell wall formation. Catalyzes the addition of glutamate to the nucleotide precursor UDP-N-acetylmuramoyl-L-alanine (UMA). This is UDP-N-acetylmuramoylalanine--D-glutamate ligase from Thermotoga sp. (strain RQ2).